The sequence spans 264 residues: Flagellar brake protein YcgR 1 (264 aa).

The PilZ domain maps to 132–249 (QRREFFRLES…RLAMIERYIA (118 aa)).

This sequence belongs to the YcgR family. As to quaternary structure, monomer. Interacts with the flagellar basal bodies.

It localises to the bacterial flagellum basal body. Acts as a flagellar brake, regulating swimming and swarming in a bis-(3'-5') cyclic diguanylic acid (c-di-GMP)-dependent manner. Binds 1 c-di-GMP dimer per subunit. Increasing levels of c-di-GMP lead to decreased motility. The sequence is that of Flagellar brake protein YcgR 1 from Dechloromonas aromatica (strain RCB).